The sequence spans 496 residues: Acetyltransferase adrJ (496 aa).

Residues His174 and Asp421 each act as proton acceptor in the active site.

The protein belongs to the plant acyltransferase family. In terms of assembly, monomer.

Its pathway is secondary metabolite biosynthesis; terpenoid biosynthesis. Functionally, acetyltransferase; part of the gene cluster that mediates the biosynthesis of andrastins, meroterpenoid compounds that exhibit inhibitory activity against ras farnesyltransferase, suggesting that they could be promising leads for antitumor agents. The first step of the pathway is the synthesis of 3,5-dimethylorsellinic acid (DMOA) by the polyketide synthase adrD via condensation of one acetyl-CoA starter unit with 3 malonyl-CoA units and 2 methylations. DMAO is then converted to farnesyl-DMAO by the prenyltransferase adrG. The methyltransferase adrK catalyzes the methylation of the carboxyl group of farnesyl-DMAO to farnesyl-DMAO methyl ester which is further converted to epoxyfarnesyl-DMAO methyl ester by the FAD-dependent monooxygenase adrH. The terpene cyclase adrI then catalyzes the carbon skeletal rearrangement to generate the andrastin E, the first compound in the pathway having the andrastin scaffold, with the tetracyclic ring system. The post-cyclization tailoring enzymes adrF, adrE, adrJ, and adrA, are involved in the conversion of andrastin E into andrastin A. The short chain dehydrogenase adrF is responsible for the oxidation of the C-3 a hydroxyl group of andrastin E to yield the corresponding ketone, andrastin D. The ketoreductase adrE stereoselectively reduces the carbonyl moiety to reverse the stereochemistry of the C-3 position to yield andrastin F. The acetyltransferase adrJ is the acetyltransferase that attaches the acetyl group to the C-3 hydroxyl group of andrastin F to yield andrastin C. Finally, the cytochrome P450 monooxygenase adrA catalyzes two sequential oxidation reactions of the C-23 methyl group, to generate the corresponding alcohol andrastin B, and aldehyde andrastin A. In Penicillium roqueforti, this protein is Acetyltransferase adrJ.